Consider the following 276-residue polypeptide: Dermonecrotic toxin LlSicTox-alphaIV1ii (276 aa).

Residue histidine 5 is part of the active site. The Mg(2+) site is built by glutamate 25 and aspartate 27. Residue histidine 41 is the Nucleophile of the active site. 2 disulfide bridges follow: cysteine 45–cysteine 51 and cysteine 47–cysteine 193. Aspartate 85 serves as a coordination point for Mg(2+).

Belongs to the arthropod phospholipase D family. Class II subfamily. The cofactor is Mg(2+). In terms of tissue distribution, expressed by the venom gland.

It localises to the secreted. It catalyses the reaction an N-(acyl)-sphingosylphosphocholine = an N-(acyl)-sphingosyl-1,3-cyclic phosphate + choline. The catalysed reaction is an N-(acyl)-sphingosylphosphoethanolamine = an N-(acyl)-sphingosyl-1,3-cyclic phosphate + ethanolamine. The enzyme catalyses a 1-acyl-sn-glycero-3-phosphocholine = a 1-acyl-sn-glycero-2,3-cyclic phosphate + choline. It carries out the reaction a 1-acyl-sn-glycero-3-phosphoethanolamine = a 1-acyl-sn-glycero-2,3-cyclic phosphate + ethanolamine. Its function is as follows. Dermonecrotic toxins cleave the phosphodiester linkage between the phosphate and headgroup of certain phospholipids (sphingolipid and lysolipid substrates), forming an alcohol (often choline) and a cyclic phosphate. This toxin acts on sphingomyelin (SM). It may also act on ceramide phosphoethanolamine (CPE), lysophosphatidylcholine (LPC) and lysophosphatidylethanolamine (LPE), but not on lysophosphatidylserine (LPS), and lysophosphatidylglycerol (LPG). It acts by transphosphatidylation, releasing exclusively cyclic phosphate products as second products. Induces dermonecrosis, hemolysis, increased vascular permeability, edema, inflammatory response, and platelet aggregation. This is Dermonecrotic toxin LlSicTox-alphaIV1ii from Loxosceles laeta (South American recluse spider).